The chain runs to 458 residues: Monomethylamine methyltransferase MtmB1 (458 aa).

Residue Pyl202 is a non-standard amino acid, pyrrolysine.

This sequence belongs to the monomethylamine methyltransferase family.

The catalysed reaction is Co(I)-[methylamine-specific corrinoid protein] + methylamine + H(+) = methyl-Co(III)-[methylamine-specific corrinoid protein] + NH4(+). It participates in one-carbon metabolism; methanogenesis from methylamine. In terms of biological role, catalyzes the transfer of the methyl group from monomethylamine to the corrinoid cofactor of MtmC. This chain is Monomethylamine methyltransferase MtmB1 (mtmB1), found in Methanosarcina barkeri (strain Fusaro / DSM 804).